The chain runs to 304 residues: Ribosomal RNA small subunit methyltransferase H (304 aa).

S-adenosyl-L-methionine-binding positions include 50 to 52, aspartate 69, phenylalanine 97, aspartate 113, and glutamine 120; that span reads GGH.

It belongs to the methyltransferase superfamily. RsmH family.

The protein localises to the cytoplasm. The catalysed reaction is cytidine(1402) in 16S rRNA + S-adenosyl-L-methionine = N(4)-methylcytidine(1402) in 16S rRNA + S-adenosyl-L-homocysteine + H(+). Its function is as follows. Specifically methylates the N4 position of cytidine in position 1402 (C1402) of 16S rRNA. This chain is Ribosomal RNA small subunit methyltransferase H, found in Rippkaea orientalis (strain PCC 8801 / RF-1) (Cyanothece sp. (strain PCC 8801)).